The chain runs to 775 residues: Cation channel sperm-associated protein subunit epsilon-like protein (775 aa).

The N-terminal stretch at Met-1–Ala-20 is a signal peptide. Asn-62 and Asn-114 each carry an N-linked (GlcNAc...) asparagine glycan.

Belongs to the CATSPERD family.

This Mus musculus (Mouse) protein is Cation channel sperm-associated protein subunit epsilon-like protein.